The primary structure comprises 248 residues: Probable aquaporin TIP2-1 (248 aa).

2 helical membrane-spanning segments follow: residues 20–40 (AYVA…GSAI) and 54–74 (AGLV…VSVA). The short motif at 83–85 (NPA) is the NPA 1 element. The next 3 membrane-spanning stretches (helical) occupy residues 97-119 (TILT…CLLL), 141-161 (GVVM…ATAA), and 168-188 (LGTI…LAAG). Positions 196-198 (NPA) match the NPA 2 motif. A helical membrane pass occupies residues 217–237 (WVGPLIGGGLAGLVYGDVFIG).

This sequence belongs to the MIP/aquaporin (TC 1.A.8) family. TIP (TC 1.A.8.10) subfamily. Expressed in roots and anthers.

It localises to the vacuole membrane. Aquaporins facilitate the transport of water and small neutral solutes across cell membranes. May be involved in transport from the vacuolar compartment to the cytoplasm. The sequence is that of Probable aquaporin TIP2-1 (TIP2-1) from Oryza sativa subsp. japonica (Rice).